A 525-amino-acid polypeptide reads, in one-letter code: ESX-1 secretion-associated protein EspE (525 aa).

Disordered regions lie at residues Ala-244–Ala-341 and Ala-375–His-494. The span at Asp-248–Ala-258 shows a compositional bias: acidic residues. Positions Glu-274–Asn-286 are enriched in basic and acidic residues. A compositionally biased stretch (gly residues) spans Ser-292 to Ala-306. 3 stretches are compositionally biased toward low complexity: residues Pro-307–Pro-319, Thr-332–Ala-341, and Ala-375–Pro-397. Positions Asp-411–Thr-440 are enriched in basic and acidic residues.

The protein resides in the cytoplasm. The protein is ESX-1 secretion-associated protein EspE of Mycolicibacterium smegmatis (strain ATCC 700084 / mc(2)155) (Mycobacterium smegmatis).